Consider the following 877-residue polypeptide: Alanine--tRNA ligase (877 aa).

Residues H562, H566, C664, and H668 each contribute to the Zn(2+) site.

Belongs to the class-II aminoacyl-tRNA synthetase family. The cofactor is Zn(2+).

The protein localises to the cytoplasm. The enzyme catalyses tRNA(Ala) + L-alanine + ATP = L-alanyl-tRNA(Ala) + AMP + diphosphate. In terms of biological role, catalyzes the attachment of alanine to tRNA(Ala) in a two-step reaction: alanine is first activated by ATP to form Ala-AMP and then transferred to the acceptor end of tRNA(Ala). Also edits incorrectly charged Ser-tRNA(Ala) and Gly-tRNA(Ala) via its editing domain. This chain is Alanine--tRNA ligase, found in Picosynechococcus sp. (strain ATCC 27264 / PCC 7002 / PR-6) (Agmenellum quadruplicatum).